Consider the following 396-residue polypeptide: Acetate kinase (396 aa).

N8 serves as a coordination point for Mg(2+). K15 lines the ATP pocket. A substrate-binding site is contributed by R89. The active-site Proton donor/acceptor is the D146. ATP is bound by residues 206–210 (HLGNG), 280–282 (DMR), and 328–332 (GVGEN). A Mg(2+)-binding site is contributed by E382.

The protein belongs to the acetokinase family. In terms of assembly, homodimer. Mg(2+) serves as cofactor. Requires Mn(2+) as cofactor.

It localises to the cytoplasm. It carries out the reaction acetate + ATP = acetyl phosphate + ADP. The protein operates within metabolic intermediate biosynthesis; acetyl-CoA biosynthesis; acetyl-CoA from acetate: step 1/2. Catalyzes the formation of acetyl phosphate from acetate and ATP. Can also catalyze the reverse reaction. In Clavibacter sepedonicus (Clavibacter michiganensis subsp. sepedonicus), this protein is Acetate kinase.